Reading from the N-terminus, the 292-residue chain is Acetylglutamate kinase (292 aa).

Substrate-binding positions include 64–65 (GG), Arg-86, and Asn-190.

It belongs to the acetylglutamate kinase family. ArgB subfamily.

It is found in the cytoplasm. The enzyme catalyses N-acetyl-L-glutamate + ATP = N-acetyl-L-glutamyl 5-phosphate + ADP. It participates in amino-acid biosynthesis; L-arginine biosynthesis; N(2)-acetyl-L-ornithine from L-glutamate: step 2/4. Catalyzes the ATP-dependent phosphorylation of N-acetyl-L-glutamate. The protein is Acetylglutamate kinase of Geobacter sp. (strain M21).